The sequence spans 402 residues: CCA-adding enzyme (402 aa).

2 residues coordinate ATP: Gly32 and Arg35. CTP contacts are provided by Gly32 and Arg35. Mg(2+)-binding residues include Asp45 and Asp47. ATP contacts are provided by Arg116, Asp159, Arg162, Arg165, and Arg168. Residues Arg116, Asp159, Arg162, Arg165, and Arg168 each contribute to the CTP site.

This sequence belongs to the tRNA nucleotidyltransferase/poly(A) polymerase family. Bacterial CCA-adding enzyme type 3 subfamily. Homodimer. Requires Mg(2+) as cofactor.

It catalyses the reaction a tRNA precursor + 2 CTP + ATP = a tRNA with a 3' CCA end + 3 diphosphate. The enzyme catalyses a tRNA with a 3' CCA end + 2 CTP + ATP = a tRNA with a 3' CCACCA end + 3 diphosphate. Catalyzes the addition and repair of the essential 3'-terminal CCA sequence in tRNAs without using a nucleic acid template. Adds these three nucleotides in the order of C, C, and A to the tRNA nucleotide-73, using CTP and ATP as substrates and producing inorganic pyrophosphate. tRNA 3'-terminal CCA addition is required both for tRNA processing and repair. Also involved in tRNA surveillance by mediating tandem CCA addition to generate a CCACCA at the 3' terminus of unstable tRNAs. While stable tRNAs receive only 3'-terminal CCA, unstable tRNAs are marked with CCACCA and rapidly degraded. This chain is CCA-adding enzyme, found in Streptococcus thermophilus (strain CNRZ 1066).